A 395-amino-acid chain; its full sequence is Probable protein arginine N-methyltransferase 6.2 (395 aa).

Over residues 1–11 the composition is skewed to gly residues; the sequence is MFAGGADGGNG. Residues 1 to 37 are disordered; it reads MFAGGADGGNGHLPRPRRARRGGGGGGGMGSPPLGPP. The region spanning 45-390 is the SAM-dependent MTase PRMT-type domain; sequence DMAYFKAYSH…YFTRDQWYVK (346 aa). S-adenosyl-L-methionine-binding residues include histidine 58, arginine 67, glycine 91, aspartate 113, and glutamate 142. Active-site residues include glutamate 156 and glutamate 165. Residues 300 to 324 are disordered; it reads KKQANQCLDGNTQDASPSNKKKKAD. A compositionally biased stretch (polar residues) spans 302–317; that stretch reads QANQCLDGNTQDASPS.

It belongs to the class I-like SAM-binding methyltransferase superfamily. Protein arginine N-methyltransferase family. PRMT6 subfamily.

Its function is as follows. Arginine methyltransferase that can both catalyze the formation of omega-N monomethylarginine (MMA) and asymmetrical dimethylarginine (aDMA). The sequence is that of Probable protein arginine N-methyltransferase 6.2 (PRMT6.2) from Oryza sativa subsp. indica (Rice).